The following is a 249-amino-acid chain: Tetraspanin-7 (249 aa).

Over M1 to K16 the chain is Cytoplasmic. Residues T17–G40 traverse the membrane as a helical segment. Topologically, residues K41–T56 are extracellular. N54 carries an N-linked (GlcNAc...) asparagine glycan. The chain crosses the membrane as a helical span at residues N57 to F75. Topologically, residues G76–W86 are cytoplasmic. Residues M87–F112 traverse the membrane as a helical segment. Residues R113–M213 lie on the Extracellular side of the membrane. Residues N155, N158, N177, and N188 are each glycosylated (N-linked (GlcNAc...) asparagine). Residues G214–A234 traverse the membrane as a helical segment. The Cytoplasmic segment spans residues C235–V249.

It belongs to the tetraspanin (TM4SF) family.

Its subcellular location is the membrane. Its function is as follows. May be involved in cell proliferation and cell motility. This chain is Tetraspanin-7 (Tspan7), found in Mus musculus (Mouse).